The following is a 240-amino-acid chain: MGQPKYKRVILKISGEALAGNQGFGIDQEVITSIASQIKEVRELGVDVAIVVGGGNIWRGVKGSARGMDRATADYMGMLATVINSLALQDALENQGVDTRVQTAIEMRQIAEPYIRRRAIRHLEKGRVVIFAAGTGNPYFSTDTTAALRAAELEADVILMAKRVDGVYDSDPEINPEAKRLKDLDYLTVLNGGLGVMDSTATSLCMDNHIPIIVFGIKEKGNILKAILGEPIGTYVGRLE.

Residue 12 to 15 coordinates ATP; the sequence is KISG. The involved in allosteric activation by GTP stretch occupies residues 20 to 25; sequence GNQGFG. Gly-54 contributes to the UMP binding site. ATP contacts are provided by Gly-55 and Arg-59. UMP is bound by residues Asp-74 and 135–142; that span reads TGNPYFST. ATP contacts are provided by Tyr-168 and Asp-171.

This sequence belongs to the UMP kinase family. Homohexamer.

The protein localises to the cytoplasm. The catalysed reaction is UMP + ATP = UDP + ADP. It participates in pyrimidine metabolism; CTP biosynthesis via de novo pathway; UDP from UMP (UMPK route): step 1/1. Its activity is regulated as follows. Allosterically activated by GTP. Inhibited by UTP. Catalyzes the reversible phosphorylation of UMP to UDP. This is Uridylate kinase from Moorella thermoacetica (strain ATCC 39073 / JCM 9320).